Reading from the N-terminus, the 245-residue chain is 3-deoxy-manno-octulosonate cytidylyltransferase (245 aa).

Belongs to the KdsB family.

It is found in the cytoplasm. The catalysed reaction is 3-deoxy-alpha-D-manno-oct-2-ulosonate + CTP = CMP-3-deoxy-beta-D-manno-octulosonate + diphosphate. It functions in the pathway nucleotide-sugar biosynthesis; CMP-3-deoxy-D-manno-octulosonate biosynthesis; CMP-3-deoxy-D-manno-octulosonate from 3-deoxy-D-manno-octulosonate and CTP: step 1/1. It participates in bacterial outer membrane biogenesis; lipopolysaccharide biosynthesis. Activates KDO (a required 8-carbon sugar) for incorporation into bacterial lipopolysaccharide in Gram-negative bacteria. The sequence is that of 3-deoxy-manno-octulosonate cytidylyltransferase from Elusimicrobium minutum (strain Pei191).